Consider the following 234-residue polypeptide: Phosphoribosylformylglycinamidine synthase subunit PurQ (234 aa).

The Glutamine amidotransferase type-1 domain maps to 5-234 (TVGIVVFPGS…ESLFAHLAGA (230 aa)). The active-site Nucleophile is the cysteine 89. Residues histidine 206 and glutamate 208 contribute to the active site.

In terms of assembly, part of the FGAM synthase complex composed of 1 PurL, 1 PurQ and 2 PurS subunits.

The protein resides in the cytoplasm. It catalyses the reaction N(2)-formyl-N(1)-(5-phospho-beta-D-ribosyl)glycinamide + L-glutamine + ATP + H2O = 2-formamido-N(1)-(5-O-phospho-beta-D-ribosyl)acetamidine + L-glutamate + ADP + phosphate + H(+). The catalysed reaction is L-glutamine + H2O = L-glutamate + NH4(+). It functions in the pathway purine metabolism; IMP biosynthesis via de novo pathway; 5-amino-1-(5-phospho-D-ribosyl)imidazole from N(2)-formyl-N(1)-(5-phospho-D-ribosyl)glycinamide: step 1/2. In terms of biological role, part of the phosphoribosylformylglycinamidine synthase complex involved in the purines biosynthetic pathway. Catalyzes the ATP-dependent conversion of formylglycinamide ribonucleotide (FGAR) and glutamine to yield formylglycinamidine ribonucleotide (FGAM) and glutamate. The FGAM synthase complex is composed of three subunits. PurQ produces an ammonia molecule by converting glutamine to glutamate. PurL transfers the ammonia molecule to FGAR to form FGAM in an ATP-dependent manner. PurS interacts with PurQ and PurL and is thought to assist in the transfer of the ammonia molecule from PurQ to PurL. The sequence is that of Phosphoribosylformylglycinamidine synthase subunit PurQ from Chlorobaculum tepidum (strain ATCC 49652 / DSM 12025 / NBRC 103806 / TLS) (Chlorobium tepidum).